The sequence spans 261 residues: Transmembrane protein 106A (261 aa).

The disordered stretch occupies residues 1–23 (MGKAVSQLTSRKDEDKPILPDNP). A helical membrane pass occupies residues 93–113 (LFVFLSVAICLLIFSLTIFFL).

The protein belongs to the TMEM106 family. Expressed in liver, spleen, lung, kidney, lymph nodes and adipose tissue (at protein level). Expressed by macrophages.

It is found in the cell membrane. Activates macrophages and polarizes them into M1-like macrophages through the activation of the MAPK and NF-kappaB signaling pathway. Upon activation, up-regulates the expression of CD80, CD86, CD69 and MHC II on macrophages, and induces the release of pro-inflammatory cytokines such as TNF, IL1B, IL6, CCL2 and nitric oxide. May play a role in inhibition of proliferation and migration. In Mus musculus (Mouse), this protein is Transmembrane protein 106A (Tmem106a).